The chain runs to 293 residues: Elongation factor Ts (293 aa).

The involved in Mg(2+) ion dislocation from EF-Tu stretch occupies residues 80-83 (TDFV).

Belongs to the EF-Ts family.

It is found in the cytoplasm. Functionally, associates with the EF-Tu.GDP complex and induces the exchange of GDP to GTP. It remains bound to the aminoacyl-tRNA.EF-Tu.GTP complex up to the GTP hydrolysis stage on the ribosome. The polypeptide is Elongation factor Ts (Paraburkholderia xenovorans (strain LB400)).